We begin with the raw amino-acid sequence, 457 residues long: L-asparaginase-like protein GL17509 (457 aa).

The N-terminal stretch at 1 to 20 (MRYLCRAQLLSLLLLPLLKA) is a signal peptide. 3 disulfides stabilise this stretch: Cys72–Cys78, Cys172–Cys188, and Cys327–Cys354.

Belongs to the Ntn-hydrolase family.

The protein is L-asparaginase-like protein GL17509 of Drosophila persimilis (Fruit fly).